The primary structure comprises 319 residues: Annexin A4 (319 aa).

N-acetylalanine is present on alanine 2. At threonine 7 the chain carries Phosphothreonine. Serine 12 carries the phosphoserine modification. 4 Annexin repeats span residues phenylalanine 14 to threonine 85, proline 86 to alanine 157, alanine 169 to lysine 241, and asparagine 245 to glycine 316. Lysine 213, lysine 293, and lysine 300 each carry N6-acetyllysine.

This sequence belongs to the annexin family.

It localises to the zymogen granule membrane. In terms of biological role, calcium/phospholipid-binding protein which promotes membrane fusion and is involved in exocytosis. The polypeptide is Annexin A4 (Homo sapiens (Human)).